The sequence spans 1056 residues: MPKRTDIHKILVIGSGPIIIGQAAEFDYSGTQACLALREEGYETILVNSNPATIMTDKEIADHVYIEPLTVESLSRIIRQEYPDAILPTLGGQIGLNLAVSLSETGLLDELGIELLGTKLDSIDEAEDREKFKELMNELGEPVPASQTVNTVDEAVEFAHQCGYPVIVRPAFTMGGTGGGICHNDAEMRTVAKNGLELSPVTQCLIEKSIAGYKEIEFEVMRDAADNVMVVCCMENFDPVGIHTGDSIVFAPNQTLSDREYQMLRDCALKLIRALKIEGGCNVQLALDPQSFQYNVIEVNPRVSRSSALASKATGYPIAKMAAKIAVGLTLDEIKNPVTKTTFAEFEPALDYVVCKIPRWPFDKFTQADRHLGSQMKATGEVMAIGRTAEEALHKAVRSLEIDEKDLFSAEAHHAPTDMLEKKLRYPQDDRLFYLAETFRRGYSLQQTHDLTKISPYFLDIVKHLVELEDDLSTKPFDVETLITSKKYGFSDATIARLWHTSSQEVRKFRKQNEVLPVYKMIDTCAAEFASSTPYFYSAYDHENESQRTKKPSILVLGSGPIRIGQGVEFDYATVHSVKAIQRAGYEAIVINSNPETVSTDFSVSDKLYFEPLTLEDVLNVIDLEQPVGVIVQFGGQTAINLAEGLAKNGVNILGTTVDDLDAAEDREVFDQVITDLNLKQPIGLTATTHSAVIKAAEKIGYPVLVRPSYVLGGKAMETVYNQEELQQYLQQNASITADHPILIDAYLEGRECEVDAICDGKDVLIPGIMEHIEHAGVHSGDSMAVYPPQHFNDDIKRQIVTATEKLAVALKCIGIMNIQFIVHNHEVYILEVNPRASRTVPFLSKITGIEMAQVATRVILGQSLADQGFTNGLYPEPQTIHVKAPVFSFNKLANVDSYLSPEMKSTGEVMGTDTTYEKALHKAFSGAHIQVPNDGKILFTIENGDEKEVLPLAKRFAQIGYQVFTTPQTASHFKDNGIHIHQEISNIDELNCLLKAGQIDLVINTMRHDYEQDSLGFQIRQSTIAQNVPLMTSLDTVNALLRVKEDQSLEAITIK.

Residues 1 to 401 are carboxyphosphate synthetic domain; the sequence is MPKRTDIHKI…ALHKAVRSLE (401 aa). ATP is bound by residues arginine 129, arginine 169, glycine 175, glycine 176, lysine 208, isoleucine 210, glutamate 215, glycine 241, isoleucine 242, histidine 243, glutamine 284, and glutamate 298. The ATP-grasp 1 domain maps to 133-327; sequence KELMNELGEP…IAKMAAKIAV (195 aa). Mg(2+) is bound by residues glutamine 284, glutamate 298, and asparagine 300. Mn(2+) is bound by residues glutamine 284, glutamate 298, and asparagine 300. The oligomerization domain stretch occupies residues 402–546; it reads IDEKDLFSAE…YSAYDHENES (145 aa). Residues 547–929 form a carbamoyl phosphate synthetic domain region; sequence QRTKKPSILV…ALHKAFSGAH (383 aa). The region spanning 671–861 is the ATP-grasp 2 domain; sequence DQVITDLNLK…MAQVATRVIL (191 aa). The ATP site is built by arginine 707, alanine 746, leucine 748, glutamate 752, glycine 777, valine 778, histidine 779, serine 780, glutamine 820, and glutamate 832. Positions 820, 832, and 834 each coordinate Mg(2+). Mn(2+) contacts are provided by glutamine 820, glutamate 832, and asparagine 834. An MGS-like domain is found at 930–1056; it reads IQVPNDGKIL…DQSLEAITIK (127 aa). An allosteric domain region spans residues 930 to 1056; it reads IQVPNDGKIL…DQSLEAITIK (127 aa).

It belongs to the CarB family. In terms of assembly, composed of two chains; the small (or glutamine) chain promotes the hydrolysis of glutamine to ammonia, which is used by the large (or ammonia) chain to synthesize carbamoyl phosphate. Tetramer of heterodimers (alpha,beta)4. Mg(2+) serves as cofactor. It depends on Mn(2+) as a cofactor.

It catalyses the reaction hydrogencarbonate + L-glutamine + 2 ATP + H2O = carbamoyl phosphate + L-glutamate + 2 ADP + phosphate + 2 H(+). It carries out the reaction hydrogencarbonate + NH4(+) + 2 ATP = carbamoyl phosphate + 2 ADP + phosphate + 2 H(+). The protein operates within amino-acid biosynthesis; L-arginine biosynthesis; carbamoyl phosphate from bicarbonate: step 1/1. It participates in pyrimidine metabolism; UMP biosynthesis via de novo pathway; (S)-dihydroorotate from bicarbonate: step 1/3. Its function is as follows. Large subunit of the glutamine-dependent carbamoyl phosphate synthetase (CPSase). CPSase catalyzes the formation of carbamoyl phosphate from the ammonia moiety of glutamine, carbonate, and phosphate donated by ATP, constituting the first step of 2 biosynthetic pathways, one leading to arginine and/or urea and the other to pyrimidine nucleotides. The large subunit (synthetase) binds the substrates ammonia (free or transferred from glutamine from the small subunit), hydrogencarbonate and ATP and carries out an ATP-coupled ligase reaction, activating hydrogencarbonate by forming carboxy phosphate which reacts with ammonia to form carbamoyl phosphate. In Limosilactobacillus reuteri (strain DSM 20016) (Lactobacillus reuteri), this protein is Carbamoyl phosphate synthase large chain.